A 273-amino-acid polypeptide reads, in one-letter code: Epidermal growth factor-like protein 7 (273 aa).

The signal sequence occupies residues 1–23 (MRGSQEVLLMWLLVLAVGGTEHA). An EMI domain is found at 27–104 (GRRVCAVRAH…TSGLPGACGA (78 aa)). Intrachain disulfides connect Cys-31-Cys-89, Cys-56-Cys-62, Cys-88-Cys-102, Cys-107-Cys-117, Cys-111-Cys-123, Cys-125-Cys-134, Cys-141-Cys-152, Cys-148-Cys-161, and Cys-163-Cys-176. Residues 103-135 (GAAICQPPCRNGGSCVQPGRCRCPAGWRGDTCQ) enclose the EGF-like 1 domain. The Cell attachment site motif lies at 130–132 (RGD). Positions 137 to 177 (DVDECSARRGGCPQRCVNTAGSYWCQCWEGHSLSADGTLCV) constitute an EGF-like 2; calcium-binding domain. Positions 192-219 (VDSAMKEEVQRLQSRVDLLEEKLQLVLA) form a coiled coil.

As to quaternary structure, interacts with ITGAV/ITGB3 in an RGD-dependent manner, increasing endothelial cell's motility.

It is found in the secreted. Its subcellular location is the extracellular space. Its function is as follows. Regulates vascular tubulogenesis in vivo. Inhibits platelet-derived growth factor (PDGF)-BB-induced smooth muscle cell migration and promotes endothelial cell adhesion to the extracellular matrix and angiogenesis. This Homo sapiens (Human) protein is Epidermal growth factor-like protein 7 (EGFL7).